We begin with the raw amino-acid sequence, 310 residues long: Olfactory receptor 2A4 (310 aa).

At 1–24 (MGDNITSIREFLLLGFPVGPRIQM) the chain is on the extracellular side. A glycan (N-linked (GlcNAc...) asparagine) is linked at Asn4. The helical transmembrane segment at 25 to 48 (LLFGLFSLFYVFTLLGNGTILGLI) threads the bilayer. Residues 49–56 (SLDSRLHA) are Cytoplasmic-facing. Residues 57-78 (PMYFFLSHLAVVDIAYACNTVP) form a helical membrane-spanning segment. Over 79-99 (RMLVNLLHPAKPISFAGRMMQ) the chain is Extracellular. A helical membrane pass occupies residues 100 to 119 (TFLFSTFAVTECLLLVVMSY). Residues 120–138 (DLYVAICHPLRYLAIMTWR) are Cytoplasmic-facing. A helical transmembrane segment spans residues 139-157 (VCITLAVTSWTTGVLLSLI). Residues 158 to 194 (HLVLLLPLPFCRPQKIYHFFCEILAVLKLACADTHIN) lie on the Extracellular side of the membrane. A helical transmembrane segment spans residues 195–218 (ENMVLAGAISGLVGPLSTIVVSYM). The Cytoplasmic portion of the chain corresponds to 219 to 235 (CILCAILQIQSREVQRK). A helical membrane pass occupies residues 236 to 258 (AFRTCFSHLCVIGLVYGTAIIMY). The Extracellular segment spans residues 259–271 (VGPRYGNPKEQKK). A helical transmembrane segment spans residues 272–291 (YLLLFHSLFNPMLNPLICSL). Over 292 to 310 (RNSEVKNTLKRVLGVERAL) the chain is Cytoplasmic.

This sequence belongs to the G-protein coupled receptor 1 family.

The protein localises to the cell membrane. Its function is as follows. Odorant receptor. In Homo sapiens (Human), this protein is Olfactory receptor 2A4 (OR2A4).